A 243-amino-acid polypeptide reads, in one-letter code: 3-deoxy-manno-octulosonate cytidylyltransferase (243 aa).

Belongs to the KdsB family.

The protein localises to the cytoplasm. The enzyme catalyses 3-deoxy-alpha-D-manno-oct-2-ulosonate + CTP = CMP-3-deoxy-beta-D-manno-octulosonate + diphosphate. The protein operates within nucleotide-sugar biosynthesis; CMP-3-deoxy-D-manno-octulosonate biosynthesis; CMP-3-deoxy-D-manno-octulosonate from 3-deoxy-D-manno-octulosonate and CTP: step 1/1. It functions in the pathway bacterial outer membrane biogenesis; lipopolysaccharide biosynthesis. In terms of biological role, activates KDO (a required 8-carbon sugar) for incorporation into bacterial lipopolysaccharide in Gram-negative bacteria. In Helicobacter pylori (strain J99 / ATCC 700824) (Campylobacter pylori J99), this protein is 3-deoxy-manno-octulosonate cytidylyltransferase.